We begin with the raw amino-acid sequence, 738 residues long: Ribosomal RNA large subunit methyltransferase K/L (738 aa).

Residues 46–157 form the THUMP domain; that stretch reads TAYRVCLWSR…ADQAVIGLDL (112 aa).

This sequence belongs to the methyltransferase superfamily. RlmKL family.

It is found in the cytoplasm. It carries out the reaction guanosine(2445) in 23S rRNA + S-adenosyl-L-methionine = N(2)-methylguanosine(2445) in 23S rRNA + S-adenosyl-L-homocysteine + H(+). It catalyses the reaction guanosine(2069) in 23S rRNA + S-adenosyl-L-methionine = N(2)-methylguanosine(2069) in 23S rRNA + S-adenosyl-L-homocysteine + H(+). Its function is as follows. Specifically methylates the guanine in position 2445 (m2G2445) and the guanine in position 2069 (m7G2069) of 23S rRNA. This Methylococcus capsulatus (strain ATCC 33009 / NCIMB 11132 / Bath) protein is Ribosomal RNA large subunit methyltransferase K/L.